Reading from the N-terminus, the 575-residue chain is Amyloid-beta A4 precursor protein-binding family A member 3 (575 aa).

Methionine 1 is subject to N-acetylmethionine. The segment covering 1-10 (MDFPTISRSP) has biased composition (polar residues). 2 disordered regions span residues 1-50 (MDFP…LSRM) and 118-211 (CEEC…GPCD). At serine 11 the chain carries Phosphoserine. A compositionally biased stretch (acidic residues) spans 143 to 153 (EDPDEDSDSPE). Residues 156–184 (EGASAEQEGSRSSSSSPEPWLETVPLVTP) are compositionally biased toward low complexity. A Phosphoserine modification is found at serine 171. The segment at 215–364 (LLDGVIFGAR…QFLRESGIDP (150 aa)) is required for interaction with NECAB3. The region spanning 217 to 381 (DGVIFGARYL…SPGACHLHNG (165 aa)) is the PID domain. Serine 372 carries the post-translational modification Phosphoserine. PDZ domains follow at residues 394–480 (EVHL…IVHC) and 485–560 (TAII…TMPA).

In terms of assembly, binds to the cytoplasmic domain of amyloid protein (APP) in vivo. Interacts with HIF1AN (via N-terminus). Interacts with NECAB3; seems to mediate the interaction between NECAB3 and HIF1AN. Expressed in all tissues examined with lower levels in brain and testis.

Its subcellular location is the cytoplasm. It is found in the perinuclear region. Functionally, may modulate processing of the amyloid-beta precursor protein (APP) and hence formation of APP-beta. May enhance the activity of HIF1A in macrophages by inhibiting the activity of HIF1AN. The chain is Amyloid-beta A4 precursor protein-binding family A member 3 (APBA3) from Homo sapiens (Human).